A 293-amino-acid chain; its full sequence is Beta-porphyranase B (293 aa).

Positions 1–21 are cleaved as a signal peptide; it reads MKLSNQFLITITLLITSITFA. The region spanning 38-291 is the GH16 domain; sequence QEWKLIENMS…WVRSWQLVDS (254 aa). Trp-67, Arg-70, Glu-156, Glu-161, and Glu-256 together coordinate substrate. Glu-156 functions as the Nucleophile in the catalytic mechanism. Glu-161 functions as the Proton donor in the catalytic mechanism.

It belongs to the glycosyl hydrolase 16 family.

It localises to the periplasm. It carries out the reaction Hydrolysis of beta-D-galactopyranose-(1-&gt;4)-alpha-L-galactopyranose-6-sulfate linkages in porphyran.. In terms of biological role, cleaves the sulfated polysaccharide porphyran at the (1-&gt;4) linkages between beta-D-galactopyranose and alpha-L-galactopyranose-6-sulfate, forming mostly the disaccharide alpha-L-galactopyranose-6-sulfate-(1-&gt;3)-beta-D-galactose. Some longer oligosaccharides of even number of residues are also observed. Inactive on the non-sulfated agarose portion of the porphyran backbone. In contrast to PorA, tolerates the presence of 3-6-anhydro-L-galactose in subsite -2. This Zobellia galactanivorans (strain DSM 12802 / CCUG 47099 / CIP 106680 / NCIMB 13871 / Dsij) protein is Beta-porphyranase B (porB).